A 184-amino-acid polypeptide reads, in one-letter code: UPF0149 protein PP_5201 (184 aa).

This sequence belongs to the UPF0149 family.

This is UPF0149 protein PP_5201 from Pseudomonas putida (strain ATCC 47054 / DSM 6125 / CFBP 8728 / NCIMB 11950 / KT2440).